The chain runs to 318 residues: MFMVNLLTMIVPILLAVAFLTLIERKVLGYMQLRKGPNVVGPYGLLQPMADALKLFIKEPLRPLTSSPSMFIIAPILALTLALTMWIPLPMPHPLINMNLAVLFMLAMSSLAVYSILWSGWASNSKYALIGAMRAVAQTISYEVTLAIILLSVLLLSGSFSLSTLITTQEHTWLMLSSWPLAMMWFISTLAETNRAPFDLTEGESELVSGFNVEYAGGPFALFFMAEYANIIMMNTLTAILFTGAFHNPLMPELYTINLIIKALLLTVFFLWIRASYPRFRYDQLMHLLWKNFLPLTLALCMWHVAMPITMAGIPPQT.

8 consecutive transmembrane segments (helical) span residues 3-23 (MVNLLTMIVPILLAVAFLTLI), 70-90 (MFIIAPILALTLALTMWIPLP), 100-120 (LAVLFMLAMSSLAVYSILWSG), 146-166 (LAIILLSVLLLSGSFSLSTLI), 171-191 (HTWLMLSSWPLAMMWFISTLA), 222-242 (LFFMAEYANIIMMNTLTAILF), 253-273 (ELYTINLIIKALLLTVFFLWI), and 294-314 (LPLTLALCMWHVAMPITMAGI).

It belongs to the complex I subunit 1 family.

Its subcellular location is the mitochondrion inner membrane. The enzyme catalyses a ubiquinone + NADH + 5 H(+)(in) = a ubiquinol + NAD(+) + 4 H(+)(out). Core subunit of the mitochondrial membrane respiratory chain NADH dehydrogenase (Complex I) that is believed to belong to the minimal assembly required for catalysis. Complex I functions in the transfer of electrons from NADH to the respiratory chain. The immediate electron acceptor for the enzyme is believed to be ubiquinone. This chain is NADH-ubiquinone oxidoreductase chain 1 (MT-ND1), found in Pteropus vampyrus (Large flying fox).